A 248-amino-acid chain; its full sequence is Probable transcriptional regulatory protein trd_1132 (248 aa).

The protein belongs to the TACO1 family.

Its subcellular location is the cytoplasm. This chain is Probable transcriptional regulatory protein trd_1132, found in Thermomicrobium roseum (strain ATCC 27502 / DSM 5159 / P-2).